The following is a 114-amino-acid chain: Large ribosomal subunit protein uL22 (114 aa).

This sequence belongs to the universal ribosomal protein uL22 family. As to quaternary structure, part of the 50S ribosomal subunit.

In terms of biological role, this protein binds specifically to 23S rRNA; its binding is stimulated by other ribosomal proteins, e.g. L4, L17, and L20. It is important during the early stages of 50S assembly. It makes multiple contacts with different domains of the 23S rRNA in the assembled 50S subunit and ribosome. Functionally, the globular domain of the protein is located near the polypeptide exit tunnel on the outside of the subunit, while an extended beta-hairpin is found that lines the wall of the exit tunnel in the center of the 70S ribosome. This is Large ribosomal subunit protein uL22 from Streptococcus suis (strain 98HAH33).